The following is a 237-amino-acid chain: Protein GrpE (237 aa).

Disordered regions lie at residues 1–52 (MSGD…RLQQ) and 200–237 (KVSM…QPGV). Positions 27–40 (ASINSDEGQSSAQS) are enriched in polar residues. Residues 204–218 (GPGPQSGASPSSAQP) are compositionally biased toward low complexity.

This sequence belongs to the GrpE family. Homodimer.

It is found in the cytoplasm. Functionally, participates actively in the response to hyperosmotic and heat shock by preventing the aggregation of stress-denatured proteins, in association with DnaK and GrpE. It is the nucleotide exchange factor for DnaK and may function as a thermosensor. Unfolded proteins bind initially to DnaJ; upon interaction with the DnaJ-bound protein, DnaK hydrolyzes its bound ATP, resulting in the formation of a stable complex. GrpE releases ADP from DnaK; ATP binding to DnaK triggers the release of the substrate protein, thus completing the reaction cycle. Several rounds of ATP-dependent interactions between DnaJ, DnaK and GrpE are required for fully efficient folding. The polypeptide is Protein GrpE (Prochlorococcus marinus (strain MIT 9313)).